Here is a 449-residue protein sequence, read N- to C-terminus: Probable hexaprenyl pyrophosphate synthase, mitochondrial (449 aa).

Residues K122, R125, and H200 each contribute to the isopentenyl diphosphate site. Residues D207 and D211 each contribute to the Mg(2+) site. Position 216 (R216) interacts with an all-trans-polyprenyl diphosphate. An isopentenyl diphosphate-binding site is contributed by R217. K300, T301, Q338, and K355 together coordinate an all-trans-polyprenyl diphosphate.

This sequence belongs to the FPP/GGPP synthase family. Mg(2+) serves as cofactor.

It is found in the mitochondrion. The protein operates within cofactor biosynthesis; ubiquinone biosynthesis. Assembly of polyisoprenoid side chains. The polyprenyl synthase of coenzyme Q biosynthesis catalyzes the formation from isopentenyl diphosphate of all trans-polyprenyl pyrophosphates generally ranging in length of between 6 and 10 isoprene units depending on the species. The chain is Probable hexaprenyl pyrophosphate synthase, mitochondrial from Neurospora crassa (strain ATCC 24698 / 74-OR23-1A / CBS 708.71 / DSM 1257 / FGSC 987).